A 506-amino-acid chain; its full sequence is Cobyric acid synthase (506 aa).

One can recognise a GATase cobBQ-type domain in the interval 251–448 (DITIAIVQLP…LHGLFDSDAF (198 aa)). The active-site Nucleophile is C332. H440 is a catalytic residue.

Belongs to the CobB/CobQ family. CobQ subfamily.

Its pathway is cofactor biosynthesis; adenosylcobalamin biosynthesis. Functionally, catalyzes amidations at positions B, D, E, and G on adenosylcobyrinic A,C-diamide. NH(2) groups are provided by glutamine, and one molecule of ATP is hydrogenolyzed for each amidation. The polypeptide is Cobyric acid synthase (Salmonella choleraesuis (strain SC-B67)).